Consider the following 221-residue polypeptide: Thiamine-phosphate synthase (221 aa).

Residues 41 to 45 (QLRDK) and Asn-82 contribute to the 4-amino-2-methyl-5-(diphosphooxymethyl)pyrimidine site. Mg(2+) contacts are provided by Asp-83 and Asp-102. Position 120 (Ser-120) interacts with 4-amino-2-methyl-5-(diphosphooxymethyl)pyrimidine. 146 to 148 (TPT) is a 2-[(2R,5Z)-2-carboxy-4-methylthiazol-5(2H)-ylidene]ethyl phosphate binding site. 4-amino-2-methyl-5-(diphosphooxymethyl)pyrimidine is bound at residue Lys-149. Residue Gly-177 participates in 2-[(2R,5Z)-2-carboxy-4-methylthiazol-5(2H)-ylidene]ethyl phosphate binding.

The protein belongs to the thiamine-phosphate synthase family. The cofactor is Mg(2+).

The enzyme catalyses 2-[(2R,5Z)-2-carboxy-4-methylthiazol-5(2H)-ylidene]ethyl phosphate + 4-amino-2-methyl-5-(diphosphooxymethyl)pyrimidine + 2 H(+) = thiamine phosphate + CO2 + diphosphate. It carries out the reaction 2-(2-carboxy-4-methylthiazol-5-yl)ethyl phosphate + 4-amino-2-methyl-5-(diphosphooxymethyl)pyrimidine + 2 H(+) = thiamine phosphate + CO2 + diphosphate. It catalyses the reaction 4-methyl-5-(2-phosphooxyethyl)-thiazole + 4-amino-2-methyl-5-(diphosphooxymethyl)pyrimidine + H(+) = thiamine phosphate + diphosphate. Its pathway is cofactor biosynthesis; thiamine diphosphate biosynthesis; thiamine phosphate from 4-amino-2-methyl-5-diphosphomethylpyrimidine and 4-methyl-5-(2-phosphoethyl)-thiazole: step 1/1. Functionally, condenses 4-methyl-5-(beta-hydroxyethyl)thiazole monophosphate (THZ-P) and 2-methyl-4-amino-5-hydroxymethyl pyrimidine pyrophosphate (HMP-PP) to form thiamine monophosphate (TMP). This is Thiamine-phosphate synthase from Mycolicibacterium vanbaalenii (strain DSM 7251 / JCM 13017 / BCRC 16820 / KCTC 9966 / NRRL B-24157 / PYR-1) (Mycobacterium vanbaalenii).